Here is a 178-residue protein sequence, read N- to C-terminus: Large ribosomal subunit protein uL5 (178 aa).

This sequence belongs to the universal ribosomal protein uL5 family. In terms of assembly, part of the 50S ribosomal subunit; contacts the 5S rRNA and probably tRNA. Forms a bridge to the 30S subunit in the 70S ribosome.

Its function is as follows. This is one of the proteins that bind and probably mediate the attachment of the 5S RNA into the large ribosomal subunit, where it forms part of the central protuberance. In the 70S ribosome it contacts protein S13 of the 30S subunit (bridge B1b), connecting the 2 subunits; this bridge is implicated in subunit movement. May contact the P site tRNA; the 5S rRNA and some of its associated proteins might help stabilize positioning of ribosome-bound tRNAs. The chain is Large ribosomal subunit protein uL5 from Sulfolobus acidocaldarius (strain ATCC 33909 / DSM 639 / JCM 8929 / NBRC 15157 / NCIMB 11770).